The chain runs to 55 residues: ATP synthase F(0) complex subunit 8 (55 aa).

A helical membrane pass occupies residues 4–24; that stretch reads LLPTPWFTIFIYAWMVLLAVI.

It belongs to the ATPase protein 8 family. In terms of assembly, component of the ATP synthase complex composed at least of ATP5F1A/subunit alpha, ATP5F1B/subunit beta, ATP5MC1/subunit c (homooctomer), MT-ATP6/subunit a, MT-ATP8/subunit 8, ATP5ME/subunit e, ATP5MF/subunit f, ATP5MG/subunit g, ATP5MK/subunit k, ATP5MJ/subunit j, ATP5F1C/subunit gamma, ATP5F1D/subunit delta, ATP5F1E/subunit epsilon, ATP5PF/subunit F6, ATP5PB/subunit b, ATP5PD/subunit d, ATP5PO/subunit OSCP. ATP synthase complex consists of a soluble F(1) head domain (subunits alpha(3) and beta(3)) - the catalytic core - and a membrane F(0) domain - the membrane proton channel (subunits c, a, 8, e, f, g, k and j). These two domains are linked by a central stalk (subunits gamma, delta, and epsilon) rotating inside the F1 region and a stationary peripheral stalk (subunits F6, b, d, and OSCP).

The protein localises to the mitochondrion membrane. Subunit 8, of the mitochondrial membrane ATP synthase complex (F(1)F(0) ATP synthase or Complex V) that produces ATP from ADP in the presence of a proton gradient across the membrane which is generated by electron transport complexes of the respiratory chain. ATP synthase complex consist of a soluble F(1) head domain - the catalytic core - and a membrane F(1) domain - the membrane proton channel. These two domains are linked by a central stalk rotating inside the F(1) region and a stationary peripheral stalk. During catalysis, ATP synthesis in the catalytic domain of F(1) is coupled via a rotary mechanism of the central stalk subunits to proton translocation. In vivo, can only synthesize ATP although its ATP hydrolase activity can be activated artificially in vitro. Part of the complex F(0) domain. The polypeptide is ATP synthase F(0) complex subunit 8 (Dicentrarchus labrax (European seabass)).